The sequence spans 79 residues: Translational regulator CsrA (79 aa).

This sequence belongs to the CsrA/RsmA family. Homodimer; the beta-strands of each monomer intercalate to form a hydrophobic core, while the alpha-helices form wings that extend away from the core.

It is found in the cytoplasm. Its function is as follows. A translational regulator that binds mRNA to regulate translation initiation and/or mRNA stability. Usually binds in the 5'-UTR at or near the Shine-Dalgarno sequence preventing ribosome-binding, thus repressing translation. Its main target seems to be the major flagellin gene, while its function is anatagonized by FliW. In Leptospira biflexa serovar Patoc (strain Patoc 1 / Ames), this protein is Translational regulator CsrA.